Consider the following 136-residue polypeptide: Phospholipase A2 (136 aa).

Ca(2+)-binding residues include W8, G10, and G12. 5 disulfides stabilise this stretch: C9–C31, C30–C70, C37–C63, C61–C95, and C105–C115. The N-linked (GlcNAc...) asparagine glycan is linked to N16. H34 is a catalytic residue. D35 is a Ca(2+) binding site. The active site involves D64.

The protein belongs to the phospholipase A2 family. It depends on Ca(2+) as a cofactor. Expressed by the venom gland.

It localises to the secreted. It carries out the reaction a 1,2-diacyl-sn-glycero-3-phosphocholine + H2O = a 1-acyl-sn-glycero-3-phosphocholine + a fatty acid + H(+). In terms of biological role, PLA2 catalyzes the calcium-dependent hydrolysis of the 2-acyl groups in 3-sn-phosphoglycerides. The sequence is that of Phospholipase A2 from Bombus pensylvanicus (American bumblebee).